A 359-amino-acid polypeptide reads, in one-letter code: MATHQVDAVVLVGGKGTRLRPLTLSAPKPMLPTAGLPFLTHLLSRIAAAGIEHVILGTSYKPAVFEAEFGDGSALGLQIEYVTEEHPLGTGGGIANVAGKLRNDTAMVFNGDVLSGADLAQLLDFHRSNRADVTLQLVRVGDPRAFGCVPTDEEDRVVAFLEKTEDPPTDQINAGCYVFERNVIDRIPQGREVSVEREVFPALLADGDCKIYGYVDASYWRDMGTPEDFVRGSADLVRGIAPSPALRGHRGEQLVHDGAAVSPGALLIGGTVVGRGAEIGPGTRLDGAVIFDGVRVEAGCVIERSIIGFGARIGPRALIRDGVIGDGADIGARCELLSGARVWPGVFLPDGGIRYSSDV.

Belongs to the transferase hexapeptide repeat family.

It carries out the reaction alpha-D-mannose 1-phosphate + GTP + H(+) = GDP-alpha-D-mannose + diphosphate. The protein operates within cell wall biogenesis. It participates in nucleotide-sugar biosynthesis; GDP-alpha-D-mannose biosynthesis; GDP-alpha-D-mannose from alpha-D-mannose 1-phosphate (GTP route): step 1/1. Its function is as follows. Catalyzes the formation of GDP-mannose from D-mannose-1-phosphate and GTP. Plays an important role in the synthesis of different glycoconjugates which are responsible for cell wall structure, virulence and immunomodulatory activity of M.tuberculosis. The polypeptide is Mannose-1-phosphate guanylyltransferase (Mycobacterium tuberculosis (strain ATCC 25618 / H37Rv)).